The sequence spans 510 residues: Protein PLASTID TRANSCRIPTIONALLY ACTIVE 16, chloroplastic (510 aa).

The segment covering 1 to 14 (MASSSTSFPLTTAP) has biased composition (polar residues). The transit peptide at 1–19 (MASSSTSFPLTTAPPQGVR) directs the protein to the chloroplast. Disordered stretches follow at residues 1-24 (MASS…NRRK) and 38-58 (LGKT…NPFQ). The segment covering 41–51 (TKGDDDSEGKQ) has biased composition (basic and acidic residues). 94 to 123 (IFVAGATGQAGIRIAQTLLQRGFSVRAGVP) serves as a coordination point for NADP(+). Residues 354–403 (ARERAEEEAKVAADKAREAAEAAKEFEKQMQKLSEKEAEAASLAEDAQQK) adopt a coiled-coil conformation. S395 carries the phosphoserine modification. T451 bears the Phosphothreonine; by STN7 mark. A disordered region spans residues 453 to 493 (RGQAKARNLPPKKAVVKQRPSSPFASKPKEERPKKPEKEVR). Residues 479-493 (KPKEERPKKPEKEVR) show a composition bias toward basic and acidic residues.

The protein belongs to the NAD(P)-dependent epimerase/dehydratase family. In terms of assembly, component of the plastid transcriptionally active chromosome required for plastid gene expression. Interacts with DEGP1 under high light conditions and maybe its degradation target. Post-translationally, excluded from chloroplast nucleoid when phosphorylated on Thr-451 by STN7 that may regulate membrane-anchoring functions of the nucleoid.

The protein localises to the plastid. It is found in the chloroplast stroma. Its subcellular location is the chloroplast nucleoid. The protein resides in the chloroplast thylakoid membrane. Its function is as follows. Probably involved in the regulation of plastid gene expression. This Arabidopsis thaliana (Mouse-ear cress) protein is Protein PLASTID TRANSCRIPTIONALLY ACTIVE 16, chloroplastic.